We begin with the raw amino-acid sequence, 333 residues long: Ferrochelatase (333 aa).

Residues histidine 202 and glutamate 284 each coordinate Fe cation.

It belongs to the ferrochelatase family.

It is found in the cytoplasm. It catalyses the reaction heme b + 2 H(+) = protoporphyrin IX + Fe(2+). It functions in the pathway porphyrin-containing compound metabolism; protoheme biosynthesis; protoheme from protoporphyrin-IX: step 1/1. Its function is as follows. Catalyzes the ferrous insertion into protoporphyrin IX. In Francisella tularensis subsp. tularensis (strain FSC 198), this protein is Ferrochelatase.